The primary structure comprises 35 residues: U1-theraphotoxin-Hs1f (35 aa).

Intrachain disulfides connect Cys-3–Cys-16, Cys-7–Cys-27, and Cys-21–Cys-32.

This sequence belongs to the neurotoxin 12 (Hwtx-2) family. 02 (Hwtx-2) subfamily. Expressed by the venom gland.

Its subcellular location is the secreted. In terms of biological role, blocks neuromuscular transmission. Acts cooperatively to potentiate the activity of huwentoxin-I. Paralyzes locusts and kills mice following intracerebroventricular injection. The polypeptide is U1-theraphotoxin-Hs1f (Cyriopagopus schmidti (Chinese bird spider)).